The primary structure comprises 93 residues: MPRSLKKGPFVDDHLLKKVDVQNSKGTKHVIKTWSRRSTVIPDMLGHTIAVHDGRKHVPVFITEGMVGHKLGEFAPTRTFRGHVKEDRRSRRG.

It belongs to the universal ribosomal protein uS19 family.

Its function is as follows. Protein S19 forms a complex with S13 that binds strongly to the 16S ribosomal RNA. The polypeptide is Small ribosomal subunit protein uS19 (Frankia alni (strain DSM 45986 / CECT 9034 / ACN14a)).